Consider the following 475-residue polypeptide: Equilibrative nucleoside transporter 3 (475 aa).

Residues 1-51 lie on the Cytoplasmic side of the membrane; the sequence is MAFASEDNVYHSSNAVYRAPSNHQEADQEALLGKLLDYPAPGLQRPEDRFN. Position 21 is a phosphoserine (S21). A Dileucine internalization motif motif is present at residues 31 to 32; that stretch reads LL. Residues 52–72 form a helical membrane-spanning segment; the sequence is GAYIIFFCLGIGGLLPWNFFV. Residues 73–105 are Extracellular-facing; sequence TAKEYWAYKLRNCSSPASGEDPEDMDILNYFES. N84 carries N-linked (GlcNAc...) asparagine glycosylation. Residues 106–126 traverse the membrane as a helical segment; the sequence is YLAVASTVPSLLFLVANFLLV. Residues 127-134 lie on the Cytoplasmic side of the membrane; it reads NRVQVHVR. Residues 135 to 155 form a helical membrane-spanning segment; the sequence is VLASLSVSLAIFVVMIVLVKV. Over 156–162 the chain is Extracellular; the sequence is DTSSWTR. Residues 163-183 traverse the membrane as a helical segment; the sequence is GFFSLTIACMAIISSSSTIFN. Over 184 to 199 the chain is Cytoplasmic; it reads SSVYGLTGSFPMRNAQ. A helical membrane pass occupies residues 200–220; sequence ALISGGAMGGTVSAVALLVDL. Residues 221–230 are Extracellular-facing; sequence AASSDVRDST. A helical transmembrane segment spans residues 231–251; sequence LAFFLMAAVFLGLCMGLYLLL. Topologically, residues 252 to 305 are cytoplasmic; it reads SQLEYARYYMRPVAPVRVFSGEDNPSQDAPSASSVAPASRVMHTPPLGPILKKT. Residues 306–326 traverse the membrane as a helical segment; sequence ASLGFCAVSLYFVTAFIIPAI. Topologically, residues 327–340 are extracellular; that stretch reads STNIQSMHKGTGSP. The helical transmembrane segment at 341 to 361 threads the bilayer; it reads WTSKFFVPLTVFLLFNFADLC. At 362-377 the chain is on the cytoplasmic side; sequence GRQVTAWIQVPGPRSK. Residues 378 to 398 traverse the membrane as a helical segment; it reads LLPGLVVSRFCLVPLFLLCNY. Residues 399 to 415 lie on the Extracellular side of the membrane; the sequence is QPRSHLTKVLFQSDIYP. Residues 416–436 traverse the membrane as a helical segment; sequence VLFTCLLGLSNGYLSTLVLIY. Over 437–450 the chain is Cytoplasmic; it reads GPKIVPRELAEATS. The chain crosses the membrane as a helical span at residues 451 to 471; the sequence is VVMLFYMSVGLMLGSACAALL. The Extracellular segment spans residues 472–475; it reads EHFI.

This sequence belongs to the SLC29A/ENT transporter (TC 2.A.57) family. As to expression, expressed in macrophages.

Its subcellular location is the lysosome membrane. It is found in the late endosome membrane. The protein resides in the mitochondrion membrane. The protein localises to the cell membrane. It carries out the reaction adenosine(in) = adenosine(out). The enzyme catalyses guanosine(in) = guanosine(out). It catalyses the reaction inosine(in) = inosine(out). The catalysed reaction is uridine(out) = uridine(in). It carries out the reaction cytidine(in) = cytidine(out). The enzyme catalyses thymidine(in) = thymidine(out). It catalyses the reaction 2'-deoxyadenosine(in) = 2'-deoxyadenosine(out). The catalysed reaction is 2'-deoxycytidine(in) = 2'-deoxycytidine(out). It carries out the reaction guanine(out) = guanine(in). The enzyme catalyses uracil(in) = uracil(out). It catalyses the reaction (R)-noradrenaline(out) = (R)-noradrenaline(in). The catalysed reaction is dopamine(out) = dopamine(in). It carries out the reaction serotonin(out) = serotonin(in). The enzyme catalyses tyramine(in) = tyramine(out). It catalyses the reaction ATP(in) = ATP(out). Functionally, uniporter that mediates the facilitative transport of nucleoside across lysosomal and mitochondrial membranes. Functions as a non-electrogenic Na(+)-independent transporter. Substrate transport is pH-dependent and enhanced under acidic condition, probably reflecting the location of the transporter in acidic intracellular compartments. Proton is not a cotransporting ion but most likely change the ionization state of the transporter which dictates transport-permissible/impermissible conformation for nucleoside translocation. May direct the nucleoside transport from lysosomes to cytosol or cytosol to mitochondria to facilitate the fundamental function of salvage synthesis of nucleic acids. Involved in the transport of nucleosides (adenosine, guanosine, uridine, thymidine, cytidine and inosine) and deoxynucleosides (deoxyadenosine, deoxycytidine). Also mediates transport of purine nucleobases (adenine, guanine), and pyrimidine nucleobases (uracil). Also able to transport monoamine neurotransmitters dopamine, serotonin, noradrenaline and tyramine. Capable of transporting ATP. Mediates nucleoside export from lysosomes in macrophages, which regulates macrophage functions and numbers. The sequence is that of Equilibrative nucleoside transporter 3 from Mus musculus (Mouse).